Here is a 154-residue protein sequence, read N- to C-terminus: Cytochrome c-type biogenesis protein CcmE (154 aa).

The Cytoplasmic portion of the chain corresponds to 1 to 8 (MTPQRKRR). The helical; Signal-anchor for type II membrane protein transmembrane segment at 9-29 (LVMLAALAGGVGVAVALALAA) threads the bilayer. Topologically, residues 30–154 (LQQNINLFYS…GGTPAAEPQP (125 aa)) are periplasmic. Residues H124 and Y128 each coordinate heme. A disordered region spans residues 130 to 154 (PPEAAHALKQGAATSGGTPAAEPQP).

It belongs to the CcmE/CycJ family.

Its subcellular location is the cell inner membrane. In terms of biological role, heme chaperone required for the biogenesis of c-type cytochromes. Transiently binds heme delivered by CcmC and transfers the heme to apo-cytochromes in a process facilitated by CcmF and CcmH. The sequence is that of Cytochrome c-type biogenesis protein CcmE from Bordetella petrii (strain ATCC BAA-461 / DSM 12804 / CCUG 43448).